The sequence spans 151 residues: Small ribosomal subunit protein uS9 (151 aa).

Residues Met1–Gln19 are compositionally biased toward low complexity. 2 disordered regions span residues Met1–Ser20 and Lys121–Arg151. Over residues Arg127–Lys136 the composition is skewed to basic and acidic residues. The span at Tyr137–Arg151 shows a compositional bias: basic residues.

This sequence belongs to the universal ribosomal protein uS9 family.

This chain is Small ribosomal subunit protein uS9 (rpsI), found in Mycobacterium bovis (strain ATCC BAA-935 / AF2122/97).